The following is a 122-amino-acid chain: Small ribosomal subunit protein uS13 (122 aa).

Residues G95–T116 show a composition bias toward basic residues. A disordered region spans residues G95–K122.

It belongs to the universal ribosomal protein uS13 family. As to quaternary structure, part of the 30S ribosomal subunit. Forms a loose heterodimer with protein S19. Forms two bridges to the 50S subunit in the 70S ribosome.

Located at the top of the head of the 30S subunit, it contacts several helices of the 16S rRNA. In the 70S ribosome it contacts the 23S rRNA (bridge B1a) and protein L5 of the 50S subunit (bridge B1b), connecting the 2 subunits; these bridges are implicated in subunit movement. Contacts the tRNAs in the A and P-sites. In Campylobacter curvus (strain 525.92), this protein is Small ribosomal subunit protein uS13.